Consider the following 125-residue polypeptide: Evasin P672 (125 aa).

The signal sequence occupies residues 1–21; sequence MAHKIAIGLVCVLYALHIMSA. 8 N-linked (GlcNAc...) asparagine glycosylation sites follow: Asn35, Asn55, Asn65, Asn72, Asn78, Asn104, Asn112, and Asn118. Cystine bridges form between Cys70–Cys110, Cys87–Cys115, and Cys105–Cys124.

The protein localises to the secreted. Functionally, salivary chemokine-binding protein which has chemokine-neutralizing activity and binds to host chemokines CCL1, CCL2, CCL3, CCL3L1, CCL7, CCL8, CCL11, CCL12, CCL13, CCL14, CCL15, CCL16, CCL18 and CCL23. Binds to CCL8 with 1:1 stoichiometry and disrupts CCL8 homodimer formation. The sequence is that of Evasin P672 from Rhipicephalus pulchellus (Yellow backed tick).